A 422-amino-acid chain; its full sequence is uncharacterized protein (422 aa).

The segment at 1 to 22 (MIQNNPKSIGSSSNKSARSSGS) is disordered. The segment covering 7–22 (KSIGSSSNKSARSSGS) has biased composition (low complexity).

This is an uncharacterized protein from Acanthamoeba polyphaga mimivirus (APMV).